The chain runs to 875 residues: uncharacterized protein (875 aa).

Residues 83-149 (PFQPPPPQPF…QPPQPPPQQL (67 aa)) form a disordered region. The segment covering 101-147 (QQPPQPPPDQPQQPQPPQQPPQQPPQQQPQPPQPPQQPPQPPQPPPQ) has biased composition (pro residues).

This is an uncharacterized protein from Orgyia pseudotsugata multicapsid polyhedrosis virus (OpMNPV).